We begin with the raw amino-acid sequence, 510 residues long: Putative thymidine phosphorylase (510 aa).

The protein belongs to the thymidine/pyrimidine-nucleoside phosphorylase family. Type 2 subfamily.

The enzyme catalyses thymidine + phosphate = 2-deoxy-alpha-D-ribose 1-phosphate + thymine. This Nitrobacter hamburgensis (strain DSM 10229 / NCIMB 13809 / X14) protein is Putative thymidine phosphorylase.